Consider the following 122-residue polypeptide: Ribosome-binding factor A (122 aa).

This sequence belongs to the RbfA family. As to quaternary structure, monomer. Binds 30S ribosomal subunits, but not 50S ribosomal subunits or 70S ribosomes.

The protein resides in the cytoplasm. Its function is as follows. One of several proteins that assist in the late maturation steps of the functional core of the 30S ribosomal subunit. Associates with free 30S ribosomal subunits (but not with 30S subunits that are part of 70S ribosomes or polysomes). Required for efficient processing of 16S rRNA. May interact with the 5'-terminal helix region of 16S rRNA. In Cupriavidus pinatubonensis (strain JMP 134 / LMG 1197) (Cupriavidus necator (strain JMP 134)), this protein is Ribosome-binding factor A.